The following is a 472-amino-acid chain: DEAD-box ATP-dependent RNA helicase 58, chloroplastic (472 aa).

A chloroplast-targeting transit peptide spans 1 to 54; it reads MASQLLNVPHLAFFPKISYASVFSTLKPSFFHSTSTRRALKSSPSSRIINLQAV. The Q motif signature appears at 76–104; it reads RQICQGFVPEHILHRMEEIGFVFPTDIQR. Residues 107–286 enclose the Helicase ATP-binding domain; sequence LPTLFTGRDC…DCIQQKWTKR (180 aa). Position 120–127 (120–127) interacts with ATP; it reads AQTGSGKT. Residues 231-234 carry the DEAD box motif; that stretch reads DEVD. The Helicase C-terminal domain maps to 314–472; the sequence is NKHQVLLALL…LMFSCEEMML (159 aa).

Belongs to the DEAD box helicase family.

It localises to the plastid. Its subcellular location is the chloroplast. The catalysed reaction is ATP + H2O = ADP + phosphate + H(+). The protein is DEAD-box ATP-dependent RNA helicase 58, chloroplastic (RH58) of Arabidopsis thaliana (Mouse-ear cress).